The following is a 292-amino-acid chain: 4-hydroxy-tetrahydrodipicolinate synthase (292 aa).

Residue T45 coordinates pyruvate. Catalysis depends on Y133, which acts as the Proton donor/acceptor. K161 acts as the Schiff-base intermediate with substrate in catalysis. Position 203 (I203) interacts with pyruvate.

The protein belongs to the DapA family. Homotetramer; dimer of dimers.

It is found in the cytoplasm. The catalysed reaction is L-aspartate 4-semialdehyde + pyruvate = (2S,4S)-4-hydroxy-2,3,4,5-tetrahydrodipicolinate + H2O + H(+). Its pathway is amino-acid biosynthesis; L-lysine biosynthesis via DAP pathway; (S)-tetrahydrodipicolinate from L-aspartate: step 3/4. Functionally, catalyzes the condensation of (S)-aspartate-beta-semialdehyde [(S)-ASA] and pyruvate to 4-hydroxy-tetrahydrodipicolinate (HTPA). The polypeptide is 4-hydroxy-tetrahydrodipicolinate synthase (Herminiimonas arsenicoxydans).